The sequence spans 107 residues: Small polypeptide DEVIL 9 (107 aa).

Positions 1 to 12 (MDEKWRLSKKDA) are enriched in basic and acidic residues. Residues 1 to 79 (MDEKWRLSKK…EKGSITQKYS (79 aa)) form a disordered region. The chain crosses the membrane as a helical span at residues 9–29 (KKDALAASCSSSSTSSKSKFS). A compositionally biased stretch (low complexity) spans 13 to 65 (LAASCSSSSTSSKSKFSRSFSTSASSSKAPAFVRSSSTKCSVPSSSSSSISRS). Positions 73–104 (SITQKYSSLAKEQKGRFYIMRRCVAMLVCWHK) are required for DVL/RTFL small polypeptide activity.

The protein belongs to the DVL/RTFL small polypeptides family.

The protein localises to the cell membrane. Functionally, small polypeptide acting as a regulatory molecule which coordinates cellular responses required for differentiation, growth and development, probably by restricting polar cell proliferation in lateral organs and coordinating socket cell recruitment and differentiation at trichome sites. This Arabidopsis thaliana (Mouse-ear cress) protein is Small polypeptide DEVIL 9.